Reading from the N-terminus, the 388-residue chain is Lysocardiolipin acyltransferase 1 (388 aa).

The next 2 membrane-spanning stretches (helical) occupy residues 9 to 29 and 46 to 66; these read FLLF…GPLL and IVAT…GVKV. Positions 85–90 match the HXXXXD motif motif; it reads HRTRLD. 2 helical membrane passes run 321–341 and 342–362; these read IILV…CASL and CLCP…LCQQ.

It belongs to the 1-acyl-sn-glycerol-3-phosphate acyltransferase family.

The protein localises to the endoplasmic reticulum membrane. It catalyses the reaction a 1-acyl-sn-glycero-3-phosphate + an acyl-CoA = a 1,2-diacyl-sn-glycero-3-phosphate + CoA. The catalysed reaction is a 1-acyl-sn-glycero-3-phospho-(1D-myo-inositol) + an acyl-CoA = a 1,2-diacyl-sn-glycero-3-phospho-(1D-myo-inositol) + CoA. The enzyme catalyses 1-acyl-sn-glycero-3-phospho-(1'-sn-glycerol) + an acyl-CoA = a 1,2-diacyl-sn-glycero-3-phospho-(1'-sn-glycerol) + CoA. It carries out the reaction 1-hexadecanoyl-sn-glycero-3-phosphate + (9Z)-octadecenoyl-CoA = 1-hexadecanoyl-2-(9Z-octadecenoyl)-sn-glycero-3-phosphate + CoA. It catalyses the reaction 1-(9Z-octadecenoyl)-sn-glycero-3-phosphate + (9Z)-octadecenoyl-CoA = 1,2-di-(9Z-octadecenoyl)-sn-glycero-3-phosphate + CoA. The catalysed reaction is 1-(9Z,12Z)-octadecadienoyl-sn-glycero-3-phosphate + (9Z)-octadecenoyl-CoA = 1-(9Z,12Z)-octadecadienoyl-2-(9Z)-octadecenoyl-sn-glycero-3-phosphate + CoA. The enzyme catalyses 1-(9Z,12Z,15Z)-octadecatrienoyl-sn-glycero-3-phosphate + (9Z)-octadecenoyl-CoA = 1-(9Z,12Z,15Z)-octadecatrienoyl-2-(9Z)-octadecenoyl-sn-glycero-3-phosphate + CoA. It carries out the reaction 1-(9Z-octadecenoyl)-sn-glycero-3-phosphate + hexadecanoyl-CoA = 1-(9Z)-octadecenoyl-2-hexadecanoyl-sn-glycero-3-phosphate + CoA. It catalyses the reaction 1-(9Z-octadecenoyl)-sn-glycero-3-phosphate + octadecanoyl-CoA = 1-(9Z-octadecenoyl)-2-octadecanoyl-sn-glycero-3-phosphate + CoA. The catalysed reaction is 1-acyl-sn-glycero-3-phospho-(1'-sn-glycerol) + (9Z)-octadecenoyl-CoA = 1-acyl-2-(9Z-octadecenoyl)-sn-glycero-3-phospho-(1'-sn-glycerol) + CoA. The enzyme catalyses a 1-acyl-sn-glycero-3-phospho-(1D-myo-inositol) + (9Z)-octadecenoyl-CoA = a 1-acyl-2-(9Z-octadecenoyl)-sn-glycero-3-phospho-(1D-myo-inositol) + CoA. It carries out the reaction 1-hexadecanoyl-sn-glycero-3-phospho-(1D-myo-inositol) + hexadecanoyl-CoA = 1,2-dihexadecanoyl-sn-glycero-3-phospho-(1D-myo-inositol) + CoA. It catalyses the reaction 1-hexadecanoyl-sn-glycero-3-phospho-(1D-myo-inositol) + octadecanoyl-CoA = 1-hexadecanoyl-2-octadecanoyl-sn-glycero-3-phospho-(1D-myo-inositol) + CoA. The catalysed reaction is 1-hexadecanoyl-sn-glycero-3-phospho-(1D-myo-inositol) + (9Z)-octadecenoyl-CoA = 1-hexadecanoyl-2-(9Z-octadecenoyl)-sn-glycero-3-phospho-(1D-myo-inositol) + CoA. The enzyme catalyses 1-hexadecanoyl-sn-glycero-3-phospho-(1D-myo-inositol) + (9Z,12Z)-octadecadienoyl-CoA = 1-hexadecanoyl-2-(9Z,12Z-octadecadienoyl)-sn-glycero-3-phospho-(1D-myo-inositol) + CoA. It carries out the reaction 1-hexadecanoyl-sn-glycero-3-phospho-(1D-myo-inositol) + (5Z,8Z,11Z,14Z)-eicosatetraenoyl-CoA = 1-hexadecanoyl-2-(5Z,8Z,11Z,14Z-eicosatetraenoyl)-sn-glycero-3-phospho-D-myo-inositol + CoA. It catalyses the reaction 1-hexadecanoyl-sn-glycero-3-phospho-(1'-sn-glycerol) + hexadecanoyl-CoA = 1,2-dihexadecanoyl-sn-glycero-3-phospho-(1'-sn-glycerol) + CoA. The catalysed reaction is 1-hexadecanoyl-sn-glycero-3-phospho-(1'-sn-glycerol) + octadecanoyl-CoA = 1-hexadecanoyl-2-octadecanoyl-sn-glycero-3-phospho-(1'-sn-glycerol) + CoA. The enzyme catalyses 1-hexadecanoyl-sn-glycero-3-phospho-(1'-sn-glycerol) + (9Z)-octadecenoyl-CoA = 1-hexadecanoyl-2-(9Z-octadecenoyl)-sn-glycero-3-phospho-(1'-sn-glycerol) + CoA. It carries out the reaction 1-hexadecanoyl-sn-glycero-3-phospho-(1'-sn-glycerol) + (9Z,12Z)-octadecadienoyl-CoA = 1-hexadecanoyl-2-(9Z,12Z-octadecadienoyl)-sn-glycero-3-phospho-(1'-sn-glycerol) + CoA. It catalyses the reaction 1-tetradecanoyl-sn-glycero-3-phospho-(1'-sn-glycerol) + (9Z)-octadecenoyl-CoA = 1-tetradecanoyl-2-(9Z-octadecenoyl)-sn-glycero-3-phospho-(1'-sn-glycerol) + CoA. The catalysed reaction is 1-octadecanoyl-sn-glycero-3-phospho-(1'-sn-glycerol) + (9Z)-octadecenoyl-CoA = 1-octadecanoyl-2-(9Z-octadecenoyl)-sn-glycero-3-phospho-(1'-sn-glycerol) + CoA. The enzyme catalyses 1-(9Z-octadecenoyl)-sn-glycero-3-phospho-(1'-sn-glycerol) + (9Z)-octadecenoyl-CoA = 1,2-di-(9Z-octadecenoyl)-sn-glycero-3-phospho-(1'-sn-glycerol) + CoA. It carries out the reaction 1-hexadecanoyl-sn-glycero-3-phospho-(1D-myo-inositol) + dodecanoyl-CoA = 1-hexadecanoyl-2-dodecanoyl-sn-glycero-3-phospho-(1D-myo-inositol) + CoA. It catalyses the reaction 1',3'-bis-[1-acyl-sn-glycero-3-phospho]-glycerol + (9Z)-octadecenoyl-CoA = 1'-[1-acyl-2-(9Z)-octadecenoyl-sn-glycero-3-phospho],3'-[1-acyl,2-hydroxy-sn-glycero-3-phospho]-glycerol + CoA. The catalysed reaction is 1'-[1,2-diacyl-sn-glycero-3-phospho],3'-[1-acyl-sn-glycero-3-phospho]-glycerol + (9Z)-octadecenoyl-CoA = 1'-[1,2-diacyl-sn-glycero-3-phospho],3'-[1-acyl,2-(9Z)-octadecenoyl-sn-glycero-3-phospho]-glycerol + CoA. The enzyme catalyses 1'-[1,2-diacyl-sn-glycero-3-phospho],3'-[1-acyl-sn-glycero-3-phospho]-glycerol + (9Z,12Z)-octadecadienoyl-CoA = 1'-[1,2-diacyl-sn-glycero-3-phospho],3'-[1-acyl,2-(9Z,12Z)-octadecadienoyl-sn-glycero-3-phospho]-glycerol + CoA. It carries out the reaction 1'-[1,2-diacyl-sn-glycero-3-phospho],3'-[1-acyl-sn-glycero-3-phospho]-glycerol + dodecanoyl-CoA = 1'-[1,2-diacyl-sn-glycero-3-phospho],3'-[1-acyl,2-dodecanoyl-sn-glycero-3-phospho]-glycerol + CoA. It catalyses the reaction 1',3'-bis-[1-acyl-sn-glycero-3-phospho]-glycerol + dodecanoyl-CoA = 1'-[1-acyl-2-dodecanoyl-sn-glycero-3-phospho],3'-[1-acyl,2-hydroxy-sn-glycero-3-phospho]-glycerol + CoA. The catalysed reaction is a 1-acyl-sn-glycero-3-phosphate + (9Z)-octadecenoyl-CoA = a 1-acyl-2-(9Z-octadecenoyl)-sn-glycero-3-phosphate + CoA. The enzyme catalyses 1',3'-bis-[1-acyl-sn-glycero-3-phospho]-glycerol + (9Z,12Z)-octadecadienoyl-CoA = 1'-[1-acyl-2-(9Z,12Z)-octadecadienoyl-sn-glycero-3-phospho],3'-[1-acyl,2-hydroxy-sn-glycero-3-phospho]-glycerol + CoA. It carries out the reaction 1',3'-bis-[1-acyl-sn-glycero-3-phospho]-glycerol + hexadecanoyl-CoA = 1'-[1-acyl-2-hexadecanoyl-sn-glycero-3-phospho],3'-[1-acyl,2-hydroxy-sn-glycero-3-phospho]-glycerol + CoA. It catalyses the reaction 1',3'-bis-[1-acyl-sn-glycero-3-phospho]-glycerol + octadecanoyl-CoA = 1'-[1-acyl-2-octadecanoyl-sn-glycero-3-phospho],3'-[1-acyl,2-hydroxy-sn-glycero-3-phospho]-glycerol + CoA. The catalysed reaction is 1'-[1,2-diacyl-sn-glycero-3-phospho],3'-[1-acyl-sn-glycero-3-phospho]-glycerol + octanoyl-CoA = 1'-[1,2-diacyl-sn-glycero-3-phospho],3'-[1-acyl,2-octanoyl-sn-glycero-3-phospho]-glycerol + CoA. The enzyme catalyses 1',3'-bis-[1-acyl-sn-glycero-3-phospho]-glycerol + octanoyl-CoA = 1'-[1-acyl-2-octanoyl-sn-glycero-3-phospho],3'-[1-acyl,2-hydroxy-sn-glycero-3-phospho]-glycerol + CoA. It carries out the reaction 1'-[1,2-diacyl-sn-glycero-3-phospho],3'-[1-acyl-sn-glycero-3-phospho]-glycerol + hexadecanoyl-CoA = 1'-[1,2-diacyl-sn-glycero-3-phospho],3'-[1-acyl,2-hexadecanoyl-sn-glycero-3-phospho]-glycerol + CoA. It catalyses the reaction 1'-[1,2-diacyl-sn-glycero-3-phospho],3'-[1-acyl-sn-glycero-3-phospho]-glycerol + (5Z,8Z,11Z,14Z)-eicosatetraenoyl-CoA = 1'-[1,2-diacyl-sn-glycero-3-phospho],3'-[1-acyl,2-(5Z,8Z,11Z,14Z)-eicosatetraenoyl-sn-glycero-3-phospho]-glycerol + CoA. The catalysed reaction is 1',3'-bis-[1-acyl-sn-glycero-3-phospho]-glycerol + (5Z,8Z,11Z,14Z)-eicosatetraenoyl-CoA = 1'-[1-acyl-2-(5Z,8Z,11Z,14Z)-eicosatetraenoyl-sn-glycero-3-phospho],3'-[1-acyl,2-hydroxy-sn-glycero-3-phospho]-glycerol + CoA. The enzyme catalyses a 1-acyl-sn-glycero-3-phospho-(1D-myo-inositol) + octadecanoyl-CoA = a 1-acyl-2-octadecanoyl-sn-glycero-3-phospho-(1D-myo-inositol) + CoA. It carries out the reaction a 2-acyl-sn-glycero-3-phospho-D-myo-inositol + octadecanoyl-CoA = 1-octadecanoyl-2-acyl-sn-glycero-3-phospho-1D-myo-inositol + CoA. It functions in the pathway phospholipid metabolism; CDP-diacylglycerol biosynthesis; CDP-diacylglycerol from sn-glycerol 3-phosphate: step 2/3. Functionally, exhibits acyl-CoA:lysocardiolipin acyltransferase (ALCAT) activity; catalyzes the reacylation of lyso-cardiolipin to cardiolipin (CL), a key step in CL remodeling. Recognizes both monolysocardiolipin and dilysocardiolipin as substrates with a preference for linoleoyl-CoA and oleoyl-CoA as acyl donors. Also exhibits 1-acyl-sn-glycerol-3-phosphate acyltransferase activity (AGPAT) activity; converts 1-acyl-sn-glycerol-3- phosphate (lysophosphatidic acid or LPA) into 1,2-diacyl-sn-glycerol-3- phosphate (phosphatidic acid or PA) by incorporating an acyl moiety at the sn-2 position of the glycerol backbone. Possesses both lysophosphatidylinositol acyltransferase (LPIAT) and lysophosphatidylglycerol acyltransferase (LPGAT) activities. Required for establishment of the hematopoietic and endothelial lineages. The polypeptide is Lysocardiolipin acyltransferase 1 (lclat1) (Danio rerio (Zebrafish)).